We begin with the raw amino-acid sequence, 524 residues long: GMP synthase [glutamine-hydrolyzing] (524 aa).

The region spanning 8-206 is the Glutamine amidotransferase type-1 domain; that stretch reads KILILDFGSQ…VRKLCQCEAR (199 aa). Cys-85 functions as the Nucleophile in the catalytic mechanism. Catalysis depends on residues His-180 and Glu-182. Residues 207 to 399 form the GMPS ATP-PPase domain; it reads WTTGNIVEDA…LGLPYEMVYR (193 aa). 234–240 provides a ligand contact to ATP; that stretch reads SGGVDSS.

Homodimer.

The enzyme catalyses XMP + L-glutamine + ATP + H2O = GMP + L-glutamate + AMP + diphosphate + 2 H(+). Its pathway is purine metabolism; GMP biosynthesis; GMP from XMP (L-Gln route): step 1/1. Its function is as follows. Catalyzes the synthesis of GMP from XMP. This Methylococcus capsulatus (strain ATCC 33009 / NCIMB 11132 / Bath) protein is GMP synthase [glutamine-hydrolyzing].